We begin with the raw amino-acid sequence, 433 residues long: 3-phosphoshikimate 1-carboxyvinyltransferase (433 aa).

Residues K21, S22, and R26 each coordinate 3-phosphoshikimate. Phosphoenolpyruvate is bound at residue K21. The phosphoenolpyruvate site is built by G96 and R124. The 3-phosphoshikimate site is built by S167, S168, Q169, S195, D310, and K337. Residue Q169 coordinates phosphoenolpyruvate. Residue D310 is the Proton acceptor of the active site. The phosphoenolpyruvate site is built by R341, R384, and K410.

Belongs to the EPSP synthase family. As to quaternary structure, monomer.

The protein localises to the cytoplasm. The enzyme catalyses 3-phosphoshikimate + phosphoenolpyruvate = 5-O-(1-carboxyvinyl)-3-phosphoshikimate + phosphate. Its pathway is metabolic intermediate biosynthesis; chorismate biosynthesis; chorismate from D-erythrose 4-phosphate and phosphoenolpyruvate: step 6/7. Functionally, catalyzes the transfer of the enolpyruvyl moiety of phosphoenolpyruvate (PEP) to the 5-hydroxyl of shikimate-3-phosphate (S3P) to produce enolpyruvyl shikimate-3-phosphate and inorganic phosphate. In Clostridium botulinum (strain Alaska E43 / Type E3), this protein is 3-phosphoshikimate 1-carboxyvinyltransferase.